The primary structure comprises 155 residues: Interleukin-2 (155 aa).

An N-terminal signal peptide occupies residues 1–20; that stretch reads MYKMQLLSCIALTLVLVANS. Threonine 23 carries an O-linked (GalNAc...) threonine glycan. Cysteines 79 and 127 form a disulfide.

The protein belongs to the IL-2 family.

It localises to the secreted. In terms of biological role, cytokine produced by activated CD4-positive helper T-cells and to a lesser extend activated CD8-positive T-cells and natural killer (NK) cells that plays pivotal roles in the immune response and tolerance. Binds to a receptor complex composed of either the high-affinity trimeric IL-2R (IL2RA/CD25, IL2RB/CD122 and IL2RG/CD132) or the low-affinity dimeric IL-2R (IL2RB and IL2RG). Interaction with the receptor leads to oligomerization and conformation changes in the IL-2R subunits resulting in downstream signaling starting with phosphorylation of JAK1 and JAK3. In turn, JAK1 and JAK3 phosphorylate the receptor to form a docking site leading to the phosphorylation of several substrates including STAT5. This process leads to activation of several pathways including STAT, phosphoinositide-3-kinase/PI3K and mitogen-activated protein kinase/MAPK pathways. Functions as a T-cell growth factor and can increase NK-cell cytolytic activity as well. Promotes strong proliferation of activated B-cells and subsequently immunoglobulin production. Plays a pivotal role in regulating the adaptive immune system by controlling the survival and proliferation of regulatory T-cells, which are required for the maintenance of immune tolerance. Moreover, participates in the differentiation and homeostasis of effector T-cell subsets, including Th1, Th2, Th17 as well as memory CD8-positive T-cells. The sequence is that of Interleukin-2 (IL2) from Halichoerus grypus (Gray seal).